We begin with the raw amino-acid sequence, 383 residues long: Outer membrane protein S2 (383 aa).

An N-terminal signal peptide occupies residues 1–21; it reads MKRKVLALVIPALLAAGAAHA.

This sequence belongs to the Gram-negative porin family. As to quaternary structure, homotrimer.

Its subcellular location is the cell outer membrane. Its function is as follows. Forms pores that allow passive diffusion of small molecules across the outer membrane. The sequence is that of Outer membrane protein S2 (ompS2) from Salmonella typhi.